We begin with the raw amino-acid sequence, 161 residues long: Cyclic pyranopterin monophosphate synthase (161 aa).

Residues 78–80 (MCH) and 116–117 (ME) contribute to the substrate site. Asp131 is a catalytic residue.

The protein belongs to the MoaC family. Homohexamer; trimer of dimers.

The catalysed reaction is (8S)-3',8-cyclo-7,8-dihydroguanosine 5'-triphosphate = cyclic pyranopterin phosphate + diphosphate. It participates in cofactor biosynthesis; molybdopterin biosynthesis. Functionally, catalyzes the conversion of (8S)-3',8-cyclo-7,8-dihydroguanosine 5'-triphosphate to cyclic pyranopterin monophosphate (cPMP). The sequence is that of Cyclic pyranopterin monophosphate synthase from Nitratidesulfovibrio vulgaris (strain ATCC 29579 / DSM 644 / CCUG 34227 / NCIMB 8303 / VKM B-1760 / Hildenborough) (Desulfovibrio vulgaris).